Consider the following 451-residue polypeptide: Phosphoglucosamine mutase (451 aa).

Catalysis depends on Ser103, which acts as the Phosphoserine intermediate. The Mg(2+) site is built by Ser103, Asp243, Asp245, and Asp247. At Ser103 the chain carries Phosphoserine.

Belongs to the phosphohexose mutase family. It depends on Mg(2+) as a cofactor. Post-translationally, activated by phosphorylation.

It catalyses the reaction alpha-D-glucosamine 1-phosphate = D-glucosamine 6-phosphate. Functionally, catalyzes the conversion of glucosamine-6-phosphate to glucosamine-1-phosphate. This is Phosphoglucosamine mutase from Limosilactobacillus reuteri subsp. reuteri (strain JCM 1112) (Lactobacillus reuteri).